Consider the following 83-residue polypeptide: Mitochondrial import inner membrane translocase subunit Tim8 (83 aa).

Positions 35 to 60 (CWDVCFSDYRPPSKMDGKTQTCIQNC) match the Twin CX3C motif motif. 2 disulfides stabilise this stretch: Cys-35/Cys-60 and Cys-39/Cys-56.

The protein belongs to the small Tim family. As to quaternary structure, heterohexamer; composed of 3 copies of ddp-1/tim-8 and 3 copies of tin-13/tim-13, named soluble 70 kDa complex. Associates with the TIM22 complex, whose core is composed of tim-22.

It localises to the mitochondrion inner membrane. In terms of biological role, mitochondrial intermembrane chaperone that participates in the import and insertion of some multi-pass transmembrane proteins into the mitochondrial inner membrane. Also required for the transfer of beta-barrel precursors from the TOM complex to the sorting and assembly machinery (SAM complex) of the outer membrane. Acts as a chaperone-like protein that protects the hydrophobic precursors from aggregation and guide them through the mitochondrial intermembrane space. The ddp-1/tim-8-tim-13 complex mediates the import of some proteins while the predominant tim-9/tin-9.1-tim-10/tin-10 70 kDa complex mediates the import of much more proteins. The sequence is that of Mitochondrial import inner membrane translocase subunit Tim8 from Caenorhabditis briggsae.